A 257-amino-acid chain; its full sequence is Hydroxyacylglutathione hydrolase (257 aa).

Positions 56, 58, 60, 61, 112, 131, and 169 each coordinate Zn(2+).

It belongs to the metallo-beta-lactamase superfamily. Glyoxalase II family. As to quaternary structure, monomer. Requires Zn(2+) as cofactor.

The catalysed reaction is an S-(2-hydroxyacyl)glutathione + H2O = a 2-hydroxy carboxylate + glutathione + H(+). It participates in secondary metabolite metabolism; methylglyoxal degradation; (R)-lactate from methylglyoxal: step 2/2. Thiolesterase that catalyzes the hydrolysis of S-D-lactoyl-glutathione to form glutathione and D-lactic acid. In Ectopseudomonas mendocina (strain ymp) (Pseudomonas mendocina), this protein is Hydroxyacylglutathione hydrolase.